The following is an 89-amino-acid chain: Small ribosomal subunit protein uS15 (89 aa).

Belongs to the universal ribosomal protein uS15 family. In terms of assembly, part of the 30S ribosomal subunit. Forms a bridge to the 50S subunit in the 70S ribosome, contacting the 23S rRNA.

In terms of biological role, one of the primary rRNA binding proteins, it binds directly to 16S rRNA where it helps nucleate assembly of the platform of the 30S subunit by binding and bridging several RNA helices of the 16S rRNA. Functionally, forms an intersubunit bridge (bridge B4) with the 23S rRNA of the 50S subunit in the ribosome. The protein is Small ribosomal subunit protein uS15 of Desulforapulum autotrophicum (strain ATCC 43914 / DSM 3382 / VKM B-1955 / HRM2) (Desulfobacterium autotrophicum).